The chain runs to 239 residues: 4-hydroxy-tetrahydrodipicolinate reductase (239 aa).

NAD(+) contacts are provided by residues 9 to 14 (GINGKM), 78 to 80 (GTT), and 104 to 107 (APNF). His-134 acts as the Proton donor/acceptor in catalysis. His-135 serves as a coordination point for (S)-2,3,4,5-tetrahydrodipicolinate. Residue Lys-138 is the Proton donor of the active site. Residue 144–145 (GT) coordinates (S)-2,3,4,5-tetrahydrodipicolinate.

The protein belongs to the DapB family.

It is found in the cytoplasm. It carries out the reaction (S)-2,3,4,5-tetrahydrodipicolinate + NAD(+) + H2O = (2S,4S)-4-hydroxy-2,3,4,5-tetrahydrodipicolinate + NADH + H(+). The enzyme catalyses (S)-2,3,4,5-tetrahydrodipicolinate + NADP(+) + H2O = (2S,4S)-4-hydroxy-2,3,4,5-tetrahydrodipicolinate + NADPH + H(+). Its pathway is amino-acid biosynthesis; L-lysine biosynthesis via DAP pathway; (S)-tetrahydrodipicolinate from L-aspartate: step 4/4. Its function is as follows. Catalyzes the conversion of 4-hydroxy-tetrahydrodipicolinate (HTPA) to tetrahydrodipicolinate. The chain is 4-hydroxy-tetrahydrodipicolinate reductase from Coxiella burnetii (strain Dugway 5J108-111).